Reading from the N-terminus, the 370-residue chain is uncharacterized protein (370 aa).

Belongs to the metallo-dependent hydrolases superfamily.

This is an uncharacterized protein from Mycobacterium bovis (strain ATCC BAA-935 / AF2122/97).